A 382-amino-acid chain; its full sequence is Cytochrome b (382 aa).

4 helical membrane passes run 36–56 (FGSL…FLTM), 80–101 (WLIR…YLHI), 116–136 (WFIG…GYVL), and 181–201 (FYTF…IHLL). Residues His86 and His100 each contribute to the heme b site. Heme b is bound by residues His185 and His199. His204 is an a ubiquinone binding site. 4 helical membrane-spanning segments follow: residues 229–249 (YKDL…TLSN), 291–311 (LGGV…PLTF), 323–343 (INQF…WIGA), and 350–370 (YIIT…LNPL).

It belongs to the cytochrome b family. As to quaternary structure, the main subunits of complex b-c1 are: cytochrome b, cytochrome c1 and the Rieske protein. The cofactor is heme b.

Its subcellular location is the mitochondrion inner membrane. Its function is as follows. Component of the ubiquinol-cytochrome c reductase complex (complex III or cytochrome b-c1 complex) that is part of the mitochondrial respiratory chain. The b-c1 complex mediates electron transfer from ubiquinol to cytochrome c. Contributes to the generation of a proton gradient across the mitochondrial membrane that is then used for ATP synthesis. This chain is Cytochrome b (MT-CYB), found in Samia ricini (Indian eri silkmoth).